The chain runs to 161 residues: uncharacterized protein (161 aa).

A signal peptide spans 1–35 (MVMAMGFDTVVAAIMATAIIVAVAYTFLAGSTSIA).

This is an uncharacterized protein from Archaeoglobus fulgidus (strain ATCC 49558 / DSM 4304 / JCM 9628 / NBRC 100126 / VC-16).